Here is a 618-residue protein sequence, read N- to C-terminus: DNA mismatch repair protein MutL (618 aa).

Positions 367-402 (EPTTAREPATPRYSGGASGGNGGRQTAGGWPHAQPG) are disordered. Residues 382-392 (GASGGNGGRQT) are compositionally biased toward gly residues.

This sequence belongs to the DNA mismatch repair MutL/HexB family.

Functionally, this protein is involved in the repair of mismatches in DNA. It is required for dam-dependent methyl-directed DNA mismatch repair. May act as a 'molecular matchmaker', a protein that promotes the formation of a stable complex between two or more DNA-binding proteins in an ATP-dependent manner without itself being part of a final effector complex. The sequence is that of DNA mismatch repair protein MutL from Salmonella paratyphi A (strain ATCC 9150 / SARB42).